The chain runs to 304 residues: uncharacterized protein (304 aa).

NAD(+)-binding positions include 136-137 (GI), 215-217 (VGR), and Asp-241. Residue Arg-217 is part of the active site. The active site involves Glu-246. His-265 functions as the Proton donor in the catalytic mechanism. Residue 265-268 (HTAN) participates in NAD(+) binding.

Belongs to the D-isomer specific 2-hydroxyacid dehydrogenase family.

This is an uncharacterized protein from Corynebacterium melassecola.